A 518-amino-acid chain; its full sequence is D-aminopeptidase (518 aa).

Serine 62 serves as the catalytic Nucleophile. The active-site Proton donor/acceptor is lysine 65. Positions 477-487 are important for specificity; the sequence is QRSMDAPSPGE. A substrate-binding site is contributed by aspartate 481.

This sequence belongs to the peptidase S12 family. As to quaternary structure, homodimer.

It catalyses the reaction Release of an N-terminal D-amino acid from a peptide, Xaa-|-Yaa-, in which Xaa is preferably D-Ala, D-Ser or D-Thr. D-amino acid amides and methyl esters also are hydrolyzed, as is glycine amide.. Its activity is regulated as follows. Inhibited by beta-lactam compounds such as 6-aminopenicillic acid, 7-aminocephalosporanic acid, benzylpenicillin and ampicillin. Inhibited by p-chloromercuribenzoate. Functionally, hydrolyzes N-terminal residues in D-amino acid-containing peptides. In Brucella abortus (strain S19), this protein is D-aminopeptidase.